The primary structure comprises 440 residues: Xaa-Pro dipeptidase (440 aa).

Residues aspartate 244, aspartate 255, histidine 335, glutamate 380, and glutamate 419 each coordinate Mn(2+).

This sequence belongs to the peptidase M24B family. Bacterial-type prolidase subfamily. Mn(2+) is required as a cofactor.

The enzyme catalyses Xaa-L-Pro dipeptide + H2O = an L-alpha-amino acid + L-proline. Functionally, splits dipeptides with a prolyl residue in the C-terminal position. This Shewanella baltica (strain OS195) protein is Xaa-Pro dipeptidase.